The primary structure comprises 636 residues: MWSVRLYPLALTLLFQCVSPAAARPSGCVDDVEVVQEIGSKEIQAPVVRFEISLTTQSIDAAGIGFREAIFINDAFIGPTLYAKQGDRIEFVVHNYMQQDTSIHFHGIDQRSTPWSDGVPGLTQSQIRPGASFLYNWTAHDAGTYFYHSHAKSQMMDGLYGAVVIAPDDEAPRPFHLISSGEADQAAMLAAEKLMRPIFVSDWSQYTSAEYHGIQHAANIDFSCMDSILVQGVGSQYCLSEEELDDMTNPIVLQLLKELAGGHMTPKGCIPPLQMFNGDFELHLENVPELAYNKCKGGQSSKGNYTIDVDTSIGWAALTFVNPGGLYPLQLSIDSHELYVYAVDGQYVYPIVADRVLVNTGSRISVMIKLDQEKARHVVRVANDYLNQILGGFAELAYDGATNAPKHPHPKTNYGGKLISSEMVSFVPEDSSPYPALRPAQSADSTFKLRLKKLGQPYRAYEWTQTGSLGYNISHEHDDPPLLLQNVEDVPATELTLKTQIGDWVDLVLVTAGPFAQAHPMHKHGNKVFLIGSGSGSFPWESVEEAIPHLPEGTFNFQDPPYLDTFNTVEMEGQANDTWTAVRYKAEYAGAWLFHCHVQTHLSGGMGMVVLDGVDAWPEVPLAYQEWNGFEPPALS.

The first 23 residues, M1–A23, serve as a signal peptide directing secretion. The Plastocyanin-like 1 domain maps to A62–D168. Residues H104 and H106 each contribute to the Cu cation site. N136 carries an N-linked (GlcNAc...) asparagine glycan. H148 and H150 together coordinate Cu cation. The N-linked (GlcNAc...) asparagine glycan is linked to N304. Residues L318–V381 enclose the Plastocyanin-like 2 domain. N-linked (GlcNAc...) asparagine glycosylation occurs at N472. The region spanning N486–G613 is the Plastocyanin-like 3 domain. H519, H522, and H524 together coordinate Cu cation. A glycan (N-linked (GlcNAc...) asparagine) is linked at N576. Cu cation-binding residues include H595, C596, H597, and H601.

It belongs to the multicopper oxidase family.

It functions in the pathway mycotoxin biosynthesis. Functionally, multicopper oxidase; part of the gene cluster that mediates the biosynthesis of cercosporin, a light-activated, non-host-selective toxin. The perylenequinone chromophore of cercosporin absorbs light energy to attain an electronically-activated triplet state and produces active oxygen species such as the hydroxyl radical, superoxide, hydrogen peroxide or singlet oxygen upon reaction with oxygen molecules. These reactive oxygen species cause damage to various cellular components including lipids, proteins and nucleic acids. The first step of cercosporin biosynthesis is performed by the polyketide synthase CTB1 which catalyzes the formation of nor-toralactone. The starter unit acyltransferase (SAT) domain of CTB1 initiates polyketide extension by the selective utilization of acetyl-CoA, which is elongated to the heptaketide in the beta-ketoacyl synthase (KS) domain by successive condensations with six malonyl units introduced by the malonyl acyltransferase (MAT) domain. The product template (PT) domain catalyzes C4-C9 and C2-C11 aldol cyclizations and dehydrations to a trihydroxynaphthalene, which is thought to be delivered to the thioesterase (TE) domain for product release. The bifunctional enzyme CTB3 then methylates nor-toralactone to toralactone before conducting an unusual oxidative aromatic ring opening. The O-methyltransferase CTB2 further methylates the nascent OH-6 of the CBT3 product, blocking further oxidation at this site before the reductase CTB6 reduces the 2-oxopropyl ketone at position C7, giving naphthalene. The FAD-dependent monooxygenase CTB5 in concert with the multicopper oxidase CTB12 are responsible for homodimerization of naphthalene with CTB7 installing the dioxepine moiety, finally producing cercosporin. The fasciclin domain-containing protein CTB11 might act with CTB5 and CTB12 whereas the roles of CTB9 and CTB10 have still to be elucidated. The chain is Multicopper oxidase CTB12 from Cercospora beticola (Sugarbeet leaf spot fungus).